Here is a 440-residue protein sequence, read N- to C-terminus: tRNA(Ile)-lysidine synthase (440 aa).

28 to 33 (SGGMDS) is an ATP binding site.

Belongs to the tRNA(Ile)-lysidine synthase family.

Its subcellular location is the cytoplasm. It catalyses the reaction cytidine(34) in tRNA(Ile2) + L-lysine + ATP = lysidine(34) in tRNA(Ile2) + AMP + diphosphate + H(+). Functionally, ligates lysine onto the cytidine present at position 34 of the AUA codon-specific tRNA(Ile) that contains the anticodon CAU, in an ATP-dependent manner. Cytidine is converted to lysidine, thus changing the amino acid specificity of the tRNA from methionine to isoleucine. This chain is tRNA(Ile)-lysidine synthase, found in Xanthomonas axonopodis pv. citri (strain 306).